The primary structure comprises 660 residues: Acetyl-coenzyme A synthetase (660 aa).

CoA is bound by residues 197–200 (RGGK) and threonine 317. Residues 397–399 (GEP), 421–426 (DTWWQT), aspartate 512, and arginine 528 contribute to the ATP site. Serine 536 contributes to the CoA binding site. Arginine 539 is a binding site for ATP. Mg(2+) contacts are provided by valine 550 and valine 555. Lysine 625 bears the N6-acetyllysine mark.

It belongs to the ATP-dependent AMP-binding enzyme family. Mg(2+) is required as a cofactor. In terms of processing, acetylated. Deacetylation by the SIR2-homolog deacetylase activates the enzyme.

The enzyme catalyses acetate + ATP + CoA = acetyl-CoA + AMP + diphosphate. Functionally, catalyzes the conversion of acetate into acetyl-CoA (AcCoA), an essential intermediate at the junction of anabolic and catabolic pathways. AcsA undergoes a two-step reaction. In the first half reaction, AcsA combines acetate with ATP to form acetyl-adenylate (AcAMP) intermediate. In the second half reaction, it can then transfer the acetyl group from AcAMP to the sulfhydryl group of CoA, forming the product AcCoA. The chain is Acetyl-coenzyme A synthetase from Paraburkholderia phymatum (strain DSM 17167 / CIP 108236 / LMG 21445 / STM815) (Burkholderia phymatum).